The primary structure comprises 226 residues: Fibrillarin-like rRNA/tRNA 2'-O-methyltransferase (226 aa).

S-adenosyl-L-methionine is bound by residues 85–86 (TT), 104–105 (EF), 129–130 (DA), and 149–152 (DVAQ).

Belongs to the methyltransferase superfamily. Fibrillarin family. As to quaternary structure, interacts with nop5. Component of box C/D small ribonucleoprotein (sRNP) particles that contain rpl7ae, FlpA and nop5, plus a guide RNA.

Functionally, involved in pre-rRNA and tRNA processing. Utilizes the methyl donor S-adenosyl-L-methionine to catalyze the site-specific 2'-hydroxyl methylation of ribose moieties in rRNA and tRNA. Site specificity is provided by a guide RNA that base pairs with the substrate. Methylation occurs at a characteristic distance from the sequence involved in base pairing with the guide RNA. The sequence is that of Fibrillarin-like rRNA/tRNA 2'-O-methyltransferase from Thermococcus gammatolerans (strain DSM 15229 / JCM 11827 / EJ3).